Reading from the N-terminus, the 663-residue chain is Oligopeptide-binding protein SarA (663 aa).

A signal peptide spans 1–22 (MKKGKILALAGVALLATGVLAA). Cys-23 carries N-palmitoyl cysteine lipidation. Residue Cys-23 is the site of S-diacylglycerol cysteine attachment. A disordered region spans residues 637-663 (QKAQEKWNKERAESNKKAQEELEKHVK).

This sequence belongs to the bacterial solute-binding protein 5 family.

Its subcellular location is the cell membrane. Functionally, may be involved in the expression of cell surface properties important for colonization of the human oral cavity. It may also be involved in uptake processes. This is Oligopeptide-binding protein SarA (sarA) from Streptococcus gordonii (strain Challis / ATCC 35105 / BCRC 15272 / CH1 / DL1 / V288).